A 185-amino-acid polypeptide reads, in one-letter code: Threonylcarbamoyl-AMP synthase (185 aa).

Positions 4 to 185 (SFRVQQAARE…LATGEVVRPG (182 aa)) constitute a YrdC-like domain.

It belongs to the SUA5 family. TsaC subfamily.

The protein localises to the cytoplasm. The catalysed reaction is L-threonine + hydrogencarbonate + ATP = L-threonylcarbamoyladenylate + diphosphate + H2O. Required for the formation of a threonylcarbamoyl group on adenosine at position 37 (t(6)A37) in tRNAs that read codons beginning with adenine. Catalyzes the conversion of L-threonine, HCO(3)(-)/CO(2) and ATP to give threonylcarbamoyl-AMP (TC-AMP) as the acyladenylate intermediate, with the release of diphosphate. This chain is Threonylcarbamoyl-AMP synthase, found in Pseudomonas putida (strain ATCC 700007 / DSM 6899 / JCM 31910 / BCRC 17059 / LMG 24140 / F1).